Here is a 326-residue protein sequence, read N- to C-terminus: Tetraacyldisaccharide 4'-kinase (326 aa).

55 to 62 provides a ligand contact to ATP; that stretch reads TAGGNGKT.

Belongs to the LpxK family.

It carries out the reaction a lipid A disaccharide + ATP = a lipid IVA + ADP + H(+). It functions in the pathway glycolipid biosynthesis; lipid IV(A) biosynthesis; lipid IV(A) from (3R)-3-hydroxytetradecanoyl-[acyl-carrier-protein] and UDP-N-acetyl-alpha-D-glucosamine: step 6/6. Its function is as follows. Transfers the gamma-phosphate of ATP to the 4'-position of a tetraacyldisaccharide 1-phosphate intermediate (termed DS-1-P) to form tetraacyldisaccharide 1,4'-bis-phosphate (lipid IVA). The sequence is that of Tetraacyldisaccharide 4'-kinase from Serratia proteamaculans (strain 568).